Consider the following 466-residue polypeptide: Soluble pyridine nucleotide transhydrogenase (466 aa).

36–45 serves as a coordination point for FAD; that stretch reads ERYHNVGGGC.

Belongs to the class-I pyridine nucleotide-disulfide oxidoreductase family. It depends on FAD as a cofactor.

The protein resides in the cytoplasm. It catalyses the reaction NAD(+) + NADPH = NADH + NADP(+). Functionally, conversion of NADPH, generated by peripheral catabolic pathways, to NADH, which can enter the respiratory chain for energy generation. This is Soluble pyridine nucleotide transhydrogenase from Salmonella paratyphi C (strain RKS4594).